The chain runs to 88 residues: MGIARILSAVLFLSVLFVVTFPALLSADHHDGRIDTCRLPSDRGRCKASFECWYFNGRTCAKFIYGGCGGNGNKFPTQEACMKRCAKA.

A signal peptide spans 1–27 (MGIARILSAVLFLSVLFVVTFPALLSA). Residues 28–33 (DHHDGR) constitute a propeptide that is removed on maturation. In terms of domain architecture, BPTI/Kunitz inhibitor spans 37 to 85 (CRLPSDRGRCKASFECWYFNGRTCAKFIYGGCGGNGNKFPTQEACMKRC). 3 disulfide bridges follow: Cys-37–Cys-85, Cys-46–Cys-68, and Cys-60–Cys-81.

This sequence belongs to the venom Kunitz-type family. 02 (native) subfamily. Expressed by the venom gland.

It localises to the secreted. Serine protease inhibitor that inhibits trypsin (Ki=0.281 nM), kallikrein (Ki=337 nM), and chymotrypsin. The protein is Kunitz-type kappaPI-theraphotoxin-Hs1c of Cyriopagopus schmidti (Chinese bird spider).